Here is a 445-residue protein sequence, read N- to C-terminus: Phosphoglucosamine mutase (445 aa).

Residue Ser-102 is the Phosphoserine intermediate of the active site. Ser-102, Asp-241, Asp-243, and Asp-245 together coordinate Mg(2+). A Phosphoserine modification is found at Ser-102.

It belongs to the phosphohexose mutase family. Requires Mg(2+) as cofactor. In terms of processing, activated by phosphorylation.

It carries out the reaction alpha-D-glucosamine 1-phosphate = D-glucosamine 6-phosphate. Its function is as follows. Catalyzes the conversion of glucosamine-6-phosphate to glucosamine-1-phosphate. The polypeptide is Phosphoglucosamine mutase (Shigella boydii serotype 4 (strain Sb227)).